A 507-amino-acid polypeptide reads, in one-letter code: Beta-glucosidase 13 (507 aa).

The signal sequence occupies residues 1–22 (MRTKYFSLLVFIIVLASNEVIA). Glutamine 50 lines the a beta-D-glucoside pocket. Residue asparagine 81 is glycosylated (N-linked (GlcNAc...) asparagine). A beta-D-glucoside-binding positions include histidine 154 and 199 to 200 (NE). Glutamate 200 (proton donor) is an active-site residue. Residues cysteine 219 and cysteine 227 are joined by a disulfide bond. Asparagine 226 is a glycosylation site (N-linked (GlcNAc...) asparagine). Tyrosine 344 provides a ligand contact to a beta-D-glucoside. Residue asparagine 358 is glycosylated (N-linked (GlcNAc...) asparagine). Residues glutamate 414, tryptophan 459, 466-467 (EW), and phenylalanine 475 each bind a beta-D-glucoside. The active-site Nucleophile is the glutamate 414.

This sequence belongs to the glycosyl hydrolase 1 family.

It carries out the reaction Hydrolysis of terminal, non-reducing beta-D-glucosyl residues with release of beta-D-glucose.. This is Beta-glucosidase 13 from Arabidopsis thaliana (Mouse-ear cress).